Here is a 656-residue protein sequence, read N- to C-terminus: Broad substrate specificity ATP-binding cassette transporter ABCG2 (656 aa).

The disordered stretch occupies residues 1–25 (MSSNSYQVSIPMSKRNTNGLPGSSS). Residues 1–394 (MSSNSYQVSI…SFKNLLGNPQ (394 aa)) are Cytoplasmic-facing. Positions 37 to 286 (LSFHDICYRV…FASIGYNCEP (250 aa)) constitute an ABC transporter domain. ATP contacts are provided by residues 80-87 (GPTGGGKS), 184-190 (RGVSGGE), glutamate 211, and histidine 243. The ABC transmembrane type-2 domain maps to 390-652 (LGNPQASVAQ…TIAYLKLLLL (263 aa)). The chain crosses the membrane as a helical span at residues 395–415 (ASVAQIIVTIILGLVIGAIFY). The Extracellular segment spans residues 416-429 (DLKNDPSGIQNRAG). A helical membrane pass occupies residues 430 to 450 (VLFFLTTNQCFSSVSAVELLV). The Cytoplasmic segment spans residues 451-478 (VEKKLFIHEYISGYYRVSSYFFGKLLSD). The helical transmembrane segment at 479–498 (LLPMRMLPSIIFTCITYFLL) threads the bilayer. Residues 499 to 507 (GLKPAVGSF) lie on the Extracellular side of the membrane. A helical membrane pass occupies residues 508 to 530 (FIMMFTLMMVAYSASSMALAIAA). Residues 531–536 (GQSVVS) lie on the Cytoplasmic side of the membrane. A helical membrane pass occupies residues 537-557 (VATLLMTISFVFMMIFSGLLV). Residues 558 to 631 (NLKTVVPWLS…LSAWGLWQNH (74 aa)) are Extracellular-facing. Residues cysteine 593 and cysteine 609 are joined by a disulfide bond. N-linked (GlcNAc...) asparagine glycosylation is found at asparagine 597 and asparagine 601. A helical membrane pass occupies residues 632–652 (VALACMMVIFLTIAYLKLLLL). The Cytoplasmic segment spans residues 653 to 656 (KKYS).

It belongs to the ABC transporter superfamily. ABCG family. Eye pigment precursor importer (TC 3.A.1.204) subfamily. Homodimer; disulfide-linked. The minimal functional unit is a homodimer, but the major oligomeric form in plasma membrane is a homotetramer with possibility of higher order oligomerization up to homododecamers. Post-translationally, N-glycosylated. Glycosylation-deficient ABCG2 is normally expressed and functional. Phosphorylated. Phosphorylation may regulate the localization to the plasma membrane, the homooligomerization and therefore, the activity of the transporter. As to expression, high expression in brain, kidney and lung. Also expressed in livere, colon, small intestine, heart, skeletal muscle, spleen, stomach and pancreas.

Its subcellular location is the cell membrane. It is found in the apical cell membrane. The protein localises to the mitochondrion membrane. It carries out the reaction ATP + H2O + xenobioticSide 1 = ADP + phosphate + xenobioticSide 2.. It catalyses the reaction urate(in) + ATP + H2O = urate(out) + ADP + phosphate + H(+). The enzyme catalyses indoxyl sulfate(in) + ATP + H2O = indoxyl sulfate(out) + ADP + phosphate + H(+). The catalysed reaction is sphing-4-enine 1-phosphate(in) + ATP + H2O = sphing-4-enine 1-phosphate(out) + ADP + phosphate + H(+). It carries out the reaction estrone 3-sulfate(in) + ATP + H2O = estrone 3-sulfate(out) + ADP + phosphate + H(+). It catalyses the reaction dehydroepiandrosterone 3-sulfate(in) + ATP + H2O = dehydroepiandrosterone 3-sulfate(out) + ADP + phosphate + H(+). The enzyme catalyses 4-methylumbelliferone sulfate(in) + ATP + H2O = 4-methylumbelliferone sulfate(out) + ADP + phosphate + H(+). The catalysed reaction is 5,7-dimethyl-2-methylamino-4-(3-pyridylmethyl)-1,3-benzothiazol-6-yl beta-D-glucuronate(in) + ATP + H2O = 5,7-dimethyl-2-methylamino-4-(3-pyridylmethyl)-1,3-benzothiazol-6-yl beta-D-glucuronate(out) + ADP + phosphate + H(+). It carries out the reaction 4-methylumbelliferone beta-D-glucuronate(in) + ATP + H2O = 4-methylumbelliferone beta-D-glucuronate(out) + ADP + phosphate + H(+). It catalyses the reaction 5,7-dimethyl-2-methylamino-4-(3-pyridylmethyl)-1,3-benzothiazol-6-yl sulfate(in) + ATP + H2O = 5,7-dimethyl-2-methylamino-4-(3-pyridylmethyl)-1,3-benzothiazol-6-yl sulfate(out) + ADP + phosphate + H(+). The enzyme catalyses 17beta-estradiol 17-O-(beta-D-glucuronate)(in) + ATP + H2O = 17beta-estradiol 17-O-(beta-D-glucuronate)(out) + ADP + phosphate + H(+). The catalysed reaction is methotrexate(in) + ATP + H2O = methotrexate(out) + ADP + phosphate + H(+). It carries out the reaction riboflavin(in) + ATP + H2O = riboflavin(out) + ADP + phosphate + H(+). It catalyses the reaction pheophorbide a(in) + ATP + H2O = pheophorbide a(out) + ADP + phosphate + H(+). The enzyme catalyses itaconate(in) + ATP + H2O = itaconate(out) + ADP + phosphate + H(+). Its function is as follows. Broad substrate specificity ATP-dependent transporter of the ATP-binding cassette (ABC) family that actively extrudes a wide variety of physiological compounds, dietary toxins and xenobiotics from cells. Involved in porphyrin homeostasis, mediating the export of protoporphyrin IX (PPIX) from both mitochondria to cytosol and cytosol to extracellular space, it also functions in the cellular export of heme. Also mediates the efflux of sphingosine-1-P from cells. Acts as a urate exporter functioning in both renal and extrarenal urate excretion. In kidney, it also functions as a physiological exporter of the uremic toxin indoxyl sulfate. Also involved in the excretion of steroids like estrone 3-sulfate/E1S, 3beta-sulfooxy-androst-5-en-17-one/DHEAS, and other sulfate conjugates. Mediates the secretion of the riboflavin and biotin vitamins into milk. Extrudes pheophorbide a, a phototoxic porphyrin catabolite of chlorophyll, reducing its bioavailability. Plays an important role in the exclusion of xenobiotics from the brain. It confers to cells a resistance to multiple drugs and other xenobiotics including mitoxantrone, pheophorbide, camptothecin, methotrexate, azidothymidine, and the anthracyclines daunorubicin and doxorubicin, through the control of their efflux. In placenta, it limits the penetration of drugs from the maternal plasma into the fetus. May play a role in early stem cell self-renewal by blocking differentiation. In inflammatory macrophages, exports itaconate from the cytosol to the extracellular compartment and limits the activation of TFEB-dependent lysosome biogenesis involved in antibacterial innate immune response. The polypeptide is Broad substrate specificity ATP-binding cassette transporter ABCG2 (ABCG2) (Sus scrofa (Pig)).